Consider the following 337-residue polypeptide: CMP-sialic acid transporter (337 aa).

Residues 1–9 (MAAPRDNVT) lie on the Cytoplasmic side of the membrane. A helical transmembrane segment spans residues 10-30 (LLFKLYCLAVMTLMAAVYTIA). Over 31 to 45 (LRYTRTSDKELYFST) the chain is Lumenal. Residues 46-64 (TAVCITEVIKLLLSVGILA) form a helical membrane-spanning segment. Lys-55 lines the CMP-N-acetyl-beta-neuraminate pocket. Residues 65-87 (KETGSLGRFKASLRENVLGSPKE) lie on the Cytoplasmic side of the membrane. The chain crosses the membrane as a helical span at residues 88–108 (LLKLSVPSLVYAVQNNMAFLA). 101 to 102 (QN) lines the CMP-N-acetyl-beta-neuraminate pocket. The Lumenal portion of the chain corresponds to 109–114 (LSNLDA). A helical membrane pass occupies residues 115–135 (AVYQVTYQLKIPCTALCTVLM). Residue 117–124 (YQVTYQLK) participates in CMP-N-acetyl-beta-neuraminate binding. Residues 136 to 141 (LNRTLS) are Cytoplasmic-facing. A helical membrane pass occupies residues 142–160 (KLQWVSVFMLCAGVTLVQW). Residues 161 to 175 (KPAQATKVVVEQNPL) are Lumenal-facing. A helical transmembrane segment spans residues 176 to 196 (LGFGAIAIAVLCSGFAGVYFE). Residue Ser-188 coordinates CMP-N-acetyl-beta-neuraminate. The Cytoplasmic portion of the chain corresponds to 197–209 (KVLKSSDTSLWVR). Position 210 to 214 (210 to 214 (NIQMY)) interacts with CMP-N-acetyl-beta-neuraminate. Residues 210–228 (NIQMYLSGIIVTLAGVYLS) traverse the membrane as a helical segment. The Lumenal portion of the chain corresponds to 229–243 (DGAEIKEKGFFYGYT). Residues 244 to 262 (YYVWFVIFLASVGGLYTSV) traverse the membrane as a helical segment. Topologically, residues 263–269 (VVKYTDN) are cytoplasmic. The helical transmembrane segment at 270–288 (IMKGFSAAAAIVLSTIASV) threads the bilayer. Lys-272 is a binding site for CMP-N-acetyl-beta-neuraminate. The Lumenal segment spans residues 289-296 (MLFGLQIT). A helical membrane pass occupies residues 297–315 (LTFALGTLLVCVSIYLYGL). At 316–337 (PRQDTTSIQQGETASKERVIGV) the chain is on the cytoplasmic side. The segment at 316–337 (PRQDTTSIQQGETASKERVIGV) is disordered.

The protein belongs to the nucleotide-sugar transporter family. SLC35A subfamily. As to quaternary structure, monomer.

The protein localises to the golgi apparatus membrane. The protein resides in the golgi apparatus. It carries out the reaction CMP-N-acetyl-beta-neuraminate(in) + CMP(out) = CMP-N-acetyl-beta-neuraminate(out) + CMP(in). It catalyses the reaction CMP-N-acetyl-beta-neuraminate(in) + AMP(out) = CMP-N-acetyl-beta-neuraminate(out) + AMP(in). The catalysed reaction is CDP-L-ribitol(in) + CDP(out) = CDP-L-ribitol(out) + CDP(in). The enzyme catalyses UMP(out) + CMP-N-acetyl-beta-neuraminate(in) = UMP(in) + CMP-N-acetyl-beta-neuraminate(out). Its function is as follows. Transports CMP-sialic acid from the cytosol into the Golgi apparatus, functioning as an antiporter that exchanges CMP-sialic acid for CMP. Binds both CMP-sialic acid and free CMP, but has higher affinity for free CMP. Also able to exchange CMP-sialic acid for AMP and UMP. Also mediates the transport of CDP-ribitol. This chain is CMP-sialic acid transporter, found in Homo sapiens (Human).